Here is a 227-residue protein sequence, read N- to C-terminus: Uracil-DNA glycosylase (227 aa).

Aspartate 65 serves as the catalytic Proton acceptor.

Belongs to the uracil-DNA glycosylase (UDG) superfamily. UNG family.

The protein resides in the cytoplasm. The catalysed reaction is Hydrolyzes single-stranded DNA or mismatched double-stranded DNA and polynucleotides, releasing free uracil.. Functionally, excises uracil residues from the DNA which can arise as a result of misincorporation of dUMP residues by DNA polymerase or due to deamination of cytosine. This Buchnera aphidicola subsp. Cinara cedri (strain Cc) protein is Uracil-DNA glycosylase.